The chain runs to 324 residues: tRNA pseudouridine synthase B (324 aa).

The active-site Nucleophile is aspartate 49. A disordered region spans residues 87–107 (RSTDDLEGQPTKTSDKRPSRE).

It belongs to the pseudouridine synthase TruB family. Type 1 subfamily.

The enzyme catalyses uridine(55) in tRNA = pseudouridine(55) in tRNA. Functionally, responsible for synthesis of pseudouridine from uracil-55 in the psi GC loop of transfer RNAs. The chain is tRNA pseudouridine synthase B from Brucella abortus (strain 2308).